The following is a 695-amino-acid chain: HIPL1 protein (695 aa).

The first 23 residues, 1–23 (MKLHQFLVFLFLFLSCFALSSWA), serve as a signal peptide directing secretion. N-linked (GlcNAc...) asparagine glycosylation is found at N37, N67, N107, N113, N128, N151, N175, N190, N208, N337, N429, N511, N527, N641, and N648. A lipid anchor (GPI-anchor amidated serine) is attached at S665. A propeptide spans 666–695 (SSCYKHINGFHGSLVVLFVSLSLILLGLLN) (removed in mature form).

This sequence belongs to the PQQ oxidoreductase GdhB family. It depends on pyrroloquinoline quinone as a cofactor.

The protein resides in the cell membrane. The chain is HIPL1 protein (HIPL1) from Arabidopsis thaliana (Mouse-ear cress).